Consider the following 603-residue polypeptide: Elongation factor 4 (603 aa).

The tr-type G domain maps to 7–189; sequence SRIRNFSIIA…SIVHLVPPPQ (183 aa). Residues 19–24 and 136–139 each bind GTP; these read DHGKST and NKID.

The protein belongs to the TRAFAC class translation factor GTPase superfamily. Classic translation factor GTPase family. LepA subfamily.

The protein resides in the cell inner membrane. It catalyses the reaction GTP + H2O = GDP + phosphate + H(+). In terms of biological role, required for accurate and efficient protein synthesis under certain stress conditions. May act as a fidelity factor of the translation reaction, by catalyzing a one-codon backward translocation of tRNAs on improperly translocated ribosomes. Back-translocation proceeds from a post-translocation (POST) complex to a pre-translocation (PRE) complex, thus giving elongation factor G a second chance to translocate the tRNAs correctly. Binds to ribosomes in a GTP-dependent manner. This is Elongation factor 4 from Cyanothece sp. (strain PCC 7425 / ATCC 29141).